A 472-amino-acid polypeptide reads, in one-letter code: WAS protein family homolog DDB_G0292878 (472 aa).

Residues 279–472 are disordered; sequence LPTYDNSNSG…ESDTDSSEWE (194 aa). The span at 282–299 shows a compositional bias: polar residues; it reads YDNSNSGSAPVNQSSGGD. A compositionally biased stretch (low complexity) spans 300–314; the sequence is NNVNNNNNNNNSNNS. Residues 320–356 show a composition bias toward pro residues; sequence PPQPTNAPPPPPPPPQSANAPPPPPPPPVSAPPPFNP. A compositionally biased stretch (acidic residues) spans 363 to 373; the sequence is NDDDDDDDDDN. Residues 374–383 show a composition bias toward gly residues; sequence GGGGGPGGAI. Residues 382–401 form the WH2 domain; the sequence is AIGDLLADIRRGHKNRLKKA. The segment covering 457–472 has biased composition (acidic residues); the sequence is TDDQDGESDTDSSEWE.

It belongs to the WASH1 family.

Acts as a nucleation-promoting factor by activating the Arp2/3 complex to induce actin polymerization. The protein is WAS protein family homolog DDB_G0292878 of Dictyostelium discoideum (Social amoeba).